Consider the following 497-residue polypeptide: Probable malate:quinone oxidoreductase (497 aa).

Belongs to the MQO family. Requires FAD as cofactor.

The enzyme catalyses (S)-malate + a quinone = a quinol + oxaloacetate. The protein operates within carbohydrate metabolism; tricarboxylic acid cycle; oxaloacetate from (S)-malate (quinone route): step 1/1. The protein is Probable malate:quinone oxidoreductase of Bacillus cereus (strain ATCC 14579 / DSM 31 / CCUG 7414 / JCM 2152 / NBRC 15305 / NCIMB 9373 / NCTC 2599 / NRRL B-3711).